The primary structure comprises 674 residues: DNA ligase (674 aa).

NAD(+) contacts are provided by residues 42–46, 91–92, and glutamate 121; these read DNVYD and SM. Lysine 123 functions as the N6-AMP-lysine intermediate in the catalytic mechanism. 4 residues coordinate NAD(+): arginine 144, glutamate 178, lysine 294, and lysine 318. Residues cysteine 412, cysteine 415, cysteine 430, and cysteine 435 each coordinate Zn(2+). The BRCT domain maps to 596–674; that stretch reads VKDSFVAGKT…ETELLANLKD (79 aa).

The protein belongs to the NAD-dependent DNA ligase family. LigA subfamily. It depends on Mg(2+) as a cofactor. The cofactor is Mn(2+).

The enzyme catalyses NAD(+) + (deoxyribonucleotide)n-3'-hydroxyl + 5'-phospho-(deoxyribonucleotide)m = (deoxyribonucleotide)n+m + AMP + beta-nicotinamide D-nucleotide.. Functionally, DNA ligase that catalyzes the formation of phosphodiester linkages between 5'-phosphoryl and 3'-hydroxyl groups in double-stranded DNA using NAD as a coenzyme and as the energy source for the reaction. It is essential for DNA replication and repair of damaged DNA. The polypeptide is DNA ligase (Lacticaseibacillus paracasei (strain ATCC 334 / BCRC 17002 / CCUG 31169 / CIP 107868 / KCTC 3260 / NRRL B-441) (Lactobacillus paracasei)).